Reading from the N-terminus, the 822-residue chain is Integrator complex assembly factor BRAT1 (822 aa).

The interval 100–200 is required for interaction with NDFIP1; it reads LGLFGESGAP…WPMCAQKIVN (101 aa). 2 HEAT repeats span residues 495-531 and 544-576; these read LLFL…IRHW and SEVP…SSQG. Position 743 is a phosphoserine (S743). Residues 820–822 carry the BRAT1-like motif motif; it reads DCY. C821 is a binding site for Zn(2+).

Belongs to the BRAT1 family. In terms of assembly, part of the multiprotein complex composed of BRAT1, WDR73, as well as integrator complex subunits INTS9 and INTS11. Interacts with BRCA1 and ATM. Interacts with MTOR and RPTOR. Interacts with NDFIP1. Interacts with SMC1A and PRKDC. Ubiquitinated by NEDD4, NEDD4L and ITCH; mono- and polyubiquitinated forms are detected. High levels detected in the cortex and much lower levels detected in the cerebellum, spinal cord and lung (at protein level).

It is found in the nucleus. It localises to the cytoplasm. In terms of biological role, component of a multiprotein complex required for the assembly of the RNA endonuclease module of the integrator complex. Associates with INTS9 and INTS11 in the cytoplasm and blocks the active site of INTS11 to inhibit the endonuclease activity of INTS11 before formation of the full integrator complex. Following dissociation of WDR73 of the complex, BRAT1 facilitates the nuclear import of the INTS9-INTS11 heterodimer. In the nucleus, INTS4 is integrated to the INTS9-INTS11 heterodimer and BRAT1 is released from the mature RNA endonuclease module by inositol hexakisphosphate (InsP6). BRAT1 is also involved in DNA damage response; activates kinases ATM, SMC1A and PRKDC by modulating their phosphorylation status following ionizing radiation (IR) stress. Plays a role in regulating mitochondrial function and cell proliferation. Required for protein stability of MTOR and MTOR-related proteins, and cell cycle progress by growth factors. This chain is Integrator complex assembly factor BRAT1, found in Mus musculus (Mouse).